The chain runs to 310 residues: Bis(hydroxyethyl) terephthalate hydrolase (310 aa).

Positions 1-48 (MQQNPHTHAAPGAARPVLRGVRRRLAAVTAAVAAVLVLGTLTGPGAQA) form a signal peptide, tat-type signal. F111 is a bis(2-hydroxyethyl) terephthalate binding site. S179 acts as the Nucleophile in catalysis. Residues M180 and W204 each coordinate bis(2-hydroxyethyl) terephthalate. Catalysis depends on charge relay system residues D225 and H257. A disulfide bridge connects residues C290 and C306.

The protein belongs to the AB hydrolase superfamily. Predicted to be exported by the Tat system. The position of the signal peptide cleavage has not been experimentally proven.

It localises to the secreted. The catalysed reaction is bis(2-hydroxyethyl) terephthalate + H2O = 4-[(2-hydroxyethoxy)carbonyl]benzoate + ethylene glycol + H(+). In terms of biological role, catalyzes the degradation of bis(hydroxyethyl) terephthalate (BHET), a derived-oligomer of the plastic poly(ethylene terephthalate) (PET), hydrolyzing BHET to mono(2-hydroxyethyl) terephthalate (MHET). Shows no activity against PET. The polypeptide is Bis(hydroxyethyl) terephthalate hydrolase (Streptomyces coelicolor (strain ATCC BAA-471 / A3(2) / M145)).